A 435-amino-acid chain; its full sequence is Diguanylate cyclase TpbB (435 aa).

At 1-22 (MNRRRRYTGSNPSLRRVLYRAH) the chain is on the cytoplasmic side. The chain crosses the membrane as a helical span at residues 23 to 43 (LGVALVAVFTAGLAVTLVGLL). Residues 44-154 (TLRAYADPNQ…VKGSGGSLLR (111 aa)) are Periplasmic-facing. A helical membrane pass occupies residues 155 to 175 (FLLTGFAGMVLCLLLTALGAF). Over 176 to 435 (YLSRRLVRGI…DSATPEAPPK (260 aa)) the chain is Cytoplasmic. Residues 183–236 (RGIVGPLDQLAKVAHTVRRERDFEKRVPEAGIAELSQLGEDFNALLDELESWQA) enclose the HAMP domain. Residues 279–415 (EQLAVLFIDS…GSRRLAELND (137 aa)) form the GGDEF domain. Mg(2+) contacts are provided by Ser-288 and Asp-330. The active-site Proton acceptor is Asp-330. The span at 413–426 (LNDPRILQEEKEID) shows a compositional bias: basic and acidic residues. The interval 413-435 (LNDPRILQEEKEIDSATPEAPPK) is disordered.

As to quaternary structure, homodimer. Interacts with YfiR. Requires Mg(2+) as cofactor. Post-translationally, phosphorylated at both Tyr residues and Ser/Thr residues. Dephosphorylated and inactivated by TpbA.

It is found in the cell inner membrane. The catalysed reaction is 2 GTP = 3',3'-c-di-GMP + 2 diphosphate. The protein operates within purine metabolism; 3',5'-cyclic di-GMP biosynthesis. Activity is tightly controlled by YfiR, a small periplasmic protein, and the OmpA/Pal-like outer-membrane lipoprotein YfiB. Diguanylate cyclase activity is inhibited by the specific interaction of YfiR with the TpbB periplasmic domain and is activated by YfiB, which releases the YfiR-mediated repression through sequestration of YfiR to the outer membrane. Release of repression leads to a conformational shift in TpbB/YfiN that propagates through the PAS and transmembrane domains to switch the cytoplasmic HAMP domain from an inactive to an active conformation and activate the C-terminal catalytic GGDEF domain. Thus, TpbB/YfiN appears to function by switching between discrete inactive and active functional states depending on the presence or absence of bound YfiR. Activity is also controlled by dephosphorylation of the periplasmic domain by the tyrosine phosphatase TpbA. These two mechanisms of regulation could in principle work in parallel or as part of the same regulatory pathway. Does not undergo product feedback inhibition. In terms of biological role, catalyzes the synthesis of cyclic-di-GMP (c-di-GMP) via the condensation of 2 GTP molecules. Functionally, part of the YfiB-TpbB-YfiR (or yfiBNR) system, encoding a tripartite signaling module that modulates intracellular c-di-GMP levels. The system is a key regulator of the small colony variant (SCV) phenotype, and plays an important role in biofilm formation and in vivo persistence. The c-di-GMP produced by TpbB/YfiN stimulates the production of the Pel and Psl exopolysaccharides, which promotes surface attachment, generates an SCV phenotype and confers resistance against phagocytosis. This Pseudomonas aeruginosa (strain ATCC 15692 / DSM 22644 / CIP 104116 / JCM 14847 / LMG 12228 / 1C / PRS 101 / PAO1) protein is Diguanylate cyclase TpbB.